Consider the following 305-residue polypeptide: Sulfate adenylyltransferase subunit 2 (305 aa).

This sequence belongs to the PAPS reductase family. CysD subfamily. In terms of assembly, heterodimer composed of CysD, the smaller subunit, and CysN.

It carries out the reaction sulfate + ATP + H(+) = adenosine 5'-phosphosulfate + diphosphate. It participates in sulfur metabolism; hydrogen sulfide biosynthesis; sulfite from sulfate: step 1/3. With CysN forms the ATP sulfurylase (ATPS) that catalyzes the adenylation of sulfate producing adenosine 5'-phosphosulfate (APS) and diphosphate, the first enzymatic step in sulfur assimilation pathway. APS synthesis involves the formation of a high-energy phosphoric-sulfuric acid anhydride bond driven by GTP hydrolysis by CysN coupled to ATP hydrolysis by CysD. This is Sulfate adenylyltransferase subunit 2 from Stutzerimonas stutzeri (strain A1501) (Pseudomonas stutzeri).